The primary structure comprises 637 residues: Conglutin beta 5 (637 aa).

A signal peptide spans 1-30; that stretch reads MAKMRVRFPMLVLLLGVVFLLAVSIGIAYG. Basic and acidic residues-rich tracts occupy residues 33–105, 136–174, and 184–203; these read DVIK…REQE, RREE…REQE, and DYGR…REQE. 2 disordered regions span residues 33 to 221 and 384 to 439; these read DVIK…YFSS and EQED…LRSN. Residues 217–375 form the Cupin type-1 1 domain; sequence YYFSSERFQT…TFNTHYEEIQ (159 aa). The segment covering 389-417 has biased composition (basic and acidic residues); the sequence is EQRREQEQSHQDEGVIVRVSKEQIQELRK. The Cupin type-1 2 domain maps to 434 to 594; the sequence is FNLRSNEPIY…IFPGSAEDVE (161 aa). Asn544 carries an N-linked (GlcNAc...) asparagine glycan. Residues 606-615 show a composition bias toward low complexity; the sequence is ANAQPQQQQQ. The disordered stretch occupies residues 606-626; the sequence is ANAQPQQQQQQREKEGRRGRR.

It belongs to the 7S seed storage protein family. In terms of assembly, component of globulins complexes which accumulate in seeds.

In terms of biological role, seed storage protein. Accumulates during seed development and is hydrolyzed after germination to provide a carbon and nitrogen source for the developing seedling. The polypeptide is Conglutin beta 5 (Lupinus angustifolius (Narrow-leaved blue lupine)).